A 498-amino-acid chain; its full sequence is L-xylulose/3-keto-L-gulonate kinase (498 aa).

Belongs to the FGGY kinase family. Homodimer.

The enzyme catalyses L-xylulose + ATP = L-xylulose 5-phosphate + ADP + H(+). It catalyses the reaction 3-dehydro-L-gulonate + ATP = 3-dehydro-L-gulonate 6-phosphate + ADP + H(+). Its function is as follows. Catalyzes the phosphorylation of L-xylulose and 3-keto-L-gulonate. Is involved in L-lyxose utilization via xylulose, and may also be involved in the utilization of 2,3-diketo-L-gulonate. In Escherichia coli (strain K12), this protein is L-xylulose/3-keto-L-gulonate kinase (lyx).